A 456-amino-acid chain; its full sequence is Phosphomannomutase (456 aa).

Catalysis depends on Ser98, which acts as the Phosphoserine intermediate. Mg(2+)-binding residues include Ser98, Asp245, Asp247, and Asp249.

This sequence belongs to the phosphohexose mutase family. Mg(2+) is required as a cofactor.

It catalyses the reaction alpha-D-mannose 1-phosphate = D-mannose 6-phosphate. Its pathway is nucleotide-sugar biosynthesis; GDP-alpha-D-mannose biosynthesis; alpha-D-mannose 1-phosphate from D-fructose 6-phosphate: step 2/2. Involved in the biosynthesis of the capsular polysaccharide colanic acid. This Salmonella typhimurium (strain LT2 / SGSC1412 / ATCC 700720) protein is Phosphomannomutase (manB).